We begin with the raw amino-acid sequence, 207 residues long: MSQFFYIHPENPQARLINQAVEILQKGGVIVYPTDSGYALGCMMGDKHAMDRIVAIRKLPEGHNFTLVCSDLSELSTYARVNNTAYRLIKNNTPGRYTFILTATKELPRRLMTSKRKTIGLRVPDNKIALDLLSALGEPILSCSLMLPNEEHTTQSDPEEIRDRLEHQVDLIIHGGYLGQEPTTVVDLTEESPVILREGSGSTAPFI.

The 188-residue stretch at 14–201 (ARLINQAVEI…SPVILREGSG (188 aa)) folds into the YrdC-like domain.

The protein belongs to the SUA5 family.

This is an uncharacterized protein from Haemophilus influenzae (strain ATCC 51907 / DSM 11121 / KW20 / Rd).